The sequence spans 372 residues: Queuine tRNA-ribosyltransferase (372 aa).

Asp92 functions as the Proton acceptor in the catalytic mechanism. Residues 92–96 (DSGGY), Asp146, Gln188, and Gly215 each bind substrate. The RNA binding stretch occupies residues 246 to 252 (GIGSLKE). The Nucleophile role is filled by Asp265. An RNA binding; important for wobble base 34 recognition region spans residues 270–274 (TRLGR). Residues Cys303, Cys305, Cys308, and His334 each coordinate Zn(2+).

It belongs to the queuine tRNA-ribosyltransferase family. As to quaternary structure, homodimer. Within each dimer, one monomer is responsible for RNA recognition and catalysis, while the other monomer binds to the replacement base PreQ1. The cofactor is Zn(2+).

It carries out the reaction 7-aminomethyl-7-carbaguanine + guanosine(34) in tRNA = 7-aminomethyl-7-carbaguanosine(34) in tRNA + guanine. The protein operates within tRNA modification; tRNA-queuosine biosynthesis. Its function is as follows. Catalyzes the base-exchange of a guanine (G) residue with the queuine precursor 7-aminomethyl-7-deazaguanine (PreQ1) at position 34 (anticodon wobble position) in tRNAs with GU(N) anticodons (tRNA-Asp, -Asn, -His and -Tyr). Catalysis occurs through a double-displacement mechanism. The nucleophile active site attacks the C1' of nucleotide 34 to detach the guanine base from the RNA, forming a covalent enzyme-RNA intermediate. The proton acceptor active site deprotonates the incoming PreQ1, allowing a nucleophilic attack on the C1' of the ribose to form the product. After dissociation, two additional enzymatic reactions on the tRNA convert PreQ1 to queuine (Q), resulting in the hypermodified nucleoside queuosine (7-(((4,5-cis-dihydroxy-2-cyclopenten-1-yl)amino)methyl)-7-deazaguanosine). The sequence is that of Queuine tRNA-ribosyltransferase from Prochlorococcus marinus (strain MIT 9301).